We begin with the raw amino-acid sequence, 455 residues long: Glutamyl-tRNA reductase (455 aa).

Residues 49–52 (TCNR), S109, 114–116 (ETQ), and Q120 each bind substrate. C50 (nucleophile) is an active-site residue. Position 189 to 194 (189 to 194 (GAGKMG)) interacts with NADP(+).

Belongs to the glutamyl-tRNA reductase family. In terms of assembly, homodimer.

The enzyme catalyses (S)-4-amino-5-oxopentanoate + tRNA(Glu) + NADP(+) = L-glutamyl-tRNA(Glu) + NADPH + H(+). It functions in the pathway porphyrin-containing compound metabolism; protoporphyrin-IX biosynthesis; 5-aminolevulinate from L-glutamyl-tRNA(Glu): step 1/2. Its function is as follows. Catalyzes the NADPH-dependent reduction of glutamyl-tRNA(Glu) to glutamate 1-semialdehyde (GSA). This chain is Glutamyl-tRNA reductase, found in Bacillus velezensis (strain DSM 23117 / BGSC 10A6 / LMG 26770 / FZB42) (Bacillus amyloliquefaciens subsp. plantarum).